Here is a 299-residue protein sequence, read N- to C-terminus: Circadian clock oscillator protein KaiA (299 aa).

Residues 9 to 148 (SRPQIFICTL…LQLSKACRLP (140 aa)) form a psR domain, binds oxidized quinones region. Residues 9-179 (SRPQIFICTL…RLSQKLKERL (171 aa)) enclose the KaiA N-terminal domain. A flexible linker region spans residues 180 to 188 (GYLGVYYKR). In terms of domain architecture, KaiA C-terminal spans 189–297 (NPQQFFHKLT…CEMYRRSIPK (109 aa)).

Homodimer. The KaiABC complex composition changes during the circadian cycle to control KaiC phosphorylation. Complexes KaiC(6), KaiA(2-4):KaiC(6), KaiB(6):KaiC(6) and KaiC(6):KaiB(6):KaiA(12) are among the most important forms, many form cooperatively. KaiA and CikA bind to the same region of the KaiB(fs) form and therefore compete.

Functionally, key component of the KaiABC oscillator complex, which constitutes the main circadian regulator in cyanobacteria. Complex composition changes during the circadian cycle to control KaiC phosphorylation. KaiA stimulates KaiC autophosphorylation, while KaiB sequesters KaiA, leading to KaiC autodephosphorylation. KaiA binding to the KaiC CII domain during the subjective day yields KaiA(2-4):KaiC(6) complexes which stimulate KaiC autophosphorylation. Phospho-Ser-431 KaiC accumulation triggers binding of KaiB during the subjective night to form the KaiB(6):KaiC(6) complex, leading to changes in the output regulators CikA and SasA. KaiB(6):KaiC(6) formation exposes a site for KaiA binding on KaiB that sequesters KaiA from KaiC's CII domain, making the KaiC(6):KaiB(6):KaiA(12) complex resulting in KaiC autodephosphorylation. Complete dephosphorylation of KaiC leads to dissociation of KaiA(2):KaiB(1), completing 1 cycle of the Kai oscillator. In terms of biological role, binds oxidized quinones via the N-terminal PsR domain, allowing it to sense redox changes and possibly mediate clock input. This chain is Circadian clock oscillator protein KaiA, found in Acaryochloris marina (strain MBIC 11017).